A 148-amino-acid polypeptide reads, in one-letter code: RING finger protein 24 (148 aa).

A helical transmembrane segment spans residues 24-44 (IYIVVFGTAIFVFILSLLFCC). The RING-type zinc finger occupies 78 to 119 (CAVCLEDFKPRDELGICPCKHAFHRKCLIKWLEVRKVCPLCN).

As to quaternary structure, interacts with TRPC1, TRPC3, TRPC4, TRPC5, TRPC6 and TRPC7.

The protein resides in the golgi apparatus membrane. In terms of biological role, may play a role in TRPCs intracellular trafficking. The protein is RING finger protein 24 (RNF24) of Homo sapiens (Human).